The primary structure comprises 778 residues: Ent-trachylobane synthase KSL2, chloroplastic (778 aa).

The transit peptide at Met-1–Ile-37 directs the protein to the chloroplast. Residues Asp-529, Asp-533, Asn-672, Asp-673, and Asp-680 each contribute to the Mg(2+) site. The short motif at Asp-529–Asp-533 is the DDXXD motif element.

It belongs to the terpene synthase family. The cofactor is Mg(2+).

It localises to the plastid. The protein resides in the chloroplast. It carries out the reaction ent-copalyl diphosphate = ent-trachylobane + diphosphate. The enzyme catalyses ent-copalyl diphosphate = ent-kaur-16-ene + diphosphate. Its pathway is secondary metabolite biosynthesis; terpenoid biosynthesis. Functionally, diterpene cyclase involved in the biosynthesis of labdane-related diterpenoids (LRDs) natural products. Catalyzes the cyclization of ent-CDP into ent-trachylobane as a major and ent-kaurene as a minor product. The sequence is that of Ent-trachylobane synthase KSL2, chloroplastic from Ricinus communis (Castor bean).